Reading from the N-terminus, the 616-residue chain is Dihydroxy-acid dehydratase (616 aa).

A Mg(2+)-binding site is contributed by aspartate 81. Cysteine 122 serves as a coordination point for [2Fe-2S] cluster. 2 residues coordinate Mg(2+): aspartate 123 and lysine 124. The residue at position 124 (lysine 124) is an N6-carboxylysine. Cysteine 195 is a binding site for [2Fe-2S] cluster. Glutamate 491 contributes to the Mg(2+) binding site. Serine 517 functions as the Proton acceptor in the catalytic mechanism.

It belongs to the IlvD/Edd family. In terms of assembly, homodimer. It depends on [2Fe-2S] cluster as a cofactor. The cofactor is Mg(2+).

The catalysed reaction is (2R)-2,3-dihydroxy-3-methylbutanoate = 3-methyl-2-oxobutanoate + H2O. It carries out the reaction (2R,3R)-2,3-dihydroxy-3-methylpentanoate = (S)-3-methyl-2-oxopentanoate + H2O. The protein operates within amino-acid biosynthesis; L-isoleucine biosynthesis; L-isoleucine from 2-oxobutanoate: step 3/4. It participates in amino-acid biosynthesis; L-valine biosynthesis; L-valine from pyruvate: step 3/4. Its function is as follows. Functions in the biosynthesis of branched-chain amino acids. Catalyzes the dehydration of (2R,3R)-2,3-dihydroxy-3-methylpentanoate (2,3-dihydroxy-3-methylvalerate) into 2-oxo-3-methylpentanoate (2-oxo-3-methylvalerate) and of (2R)-2,3-dihydroxy-3-methylbutanoate (2,3-dihydroxyisovalerate) into 2-oxo-3-methylbutanoate (2-oxoisovalerate), the penultimate precursor to L-isoleucine and L-valine, respectively. The chain is Dihydroxy-acid dehydratase from Escherichia coli O9:H4 (strain HS).